We begin with the raw amino-acid sequence, 526 residues long: Tyrosine-protein kinase transforming protein Src (526 aa).

Residues 1–57 are disordered; that stretch reads MGSSKSKPKDPSQRRRSLEPPDSTHHGGFPASQTPNKTAAPDTHRTPSRSFGTVATE. Residue glycine 2 is the site of N-myristoyl glycine; by host attachment. Over residues 7 to 25 the composition is skewed to basic and acidic residues; sequence KPKDPSQRRRSLEPPDSTH. The SH3 domain maps to 81–142; sequence GGVTTFVALY…PSNYVAPSDS (62 aa). The 98-residue stretch at 148-245 folds into the SH2 domain; that stretch reads WYFGKITRRE…GLCHRLTNVC (98 aa). The Protein kinase domain maps to 267 to 517; the sequence is LRLEVKLGQG…TFEYLQAQLL (251 aa). ATP is bound by residues 273 to 281 and lysine 295; that span reads LGQGCFGEV. Residue aspartate 386 is the Proton acceptor of the active site. Tyrosine 416 is subject to Phosphotyrosine; by autocatalysis.

This sequence belongs to the protein kinase superfamily. Tyr protein kinase family. SRC subfamily. Homodimer. In terms of processing, the phosphorylated form is termed pp60v-src.

It catalyses the reaction L-tyrosyl-[protein] + ATP = O-phospho-L-tyrosyl-[protein] + ADP + H(+). In terms of biological role, this phosphoprotein, required for both the initiation and the maintenance of neoplastic transformation, is a protein kinase that catalyzes the phosphorylation of tyrosine residues in vitro. Causes mitotic slippage in addition to cytokinesis failure in the host cell. Phosphorylates and attenuates the activity of host CDK1, possibly causing the mitotic slippage. This is Tyrosine-protein kinase transforming protein Src (V-SRC) from Rous sarcoma virus subgroup A (strain Schmidt-Ruppin) (RSV-SR-A).